The chain runs to 175 residues: MSTGSNTKRYETPNHPYQGERIAQEGDLLGRYGLKNKEELWRTQSELREYRREARRLIGEAQGDVSVAEALGEEFLDRLRRYGILSADDDISKVLGLDVSDILERRLQTIVYRQGLASTPKQARQFIVHEHITVNGARVTRPSKMVEETEANAIAFDENSPLADSLHPARAEGQE.

In terms of domain architecture, S4 RNA-binding spans 105–169; the sequence is RRLQTIVYRQ…SPLADSLHPA (65 aa).

Belongs to the universal ribosomal protein uS4 family. In terms of assembly, part of the 30S ribosomal subunit. Contacts protein S5. The interaction surface between S4 and S5 is involved in control of translational fidelity.

In terms of biological role, one of the primary rRNA binding proteins, it binds directly to 16S rRNA where it nucleates assembly of the body of the 30S subunit. Functionally, with S5 and S12 plays an important role in translational accuracy. This Haloquadratum walsbyi (strain DSM 16790 / HBSQ001) protein is Small ribosomal subunit protein uS4.